A 198-amino-acid polypeptide reads, in one-letter code: Ribonuclease HII (198 aa).

An RNase H type-2 domain is found at E6–D198. Residues D12, E13, and D108 each contribute to the a divalent metal cation site.

The protein belongs to the RNase HII family. Mn(2+) is required as a cofactor. Mg(2+) serves as cofactor.

Its subcellular location is the cytoplasm. The enzyme catalyses Endonucleolytic cleavage to 5'-phosphomonoester.. Endonuclease that specifically degrades the RNA of RNA-DNA hybrids. The chain is Ribonuclease HII from Acaryochloris marina (strain MBIC 11017).